Here is a 339-residue protein sequence, read N- to C-terminus: Deoxyhypusine hydroxylase (339 aa).

2 HEAT-like PBS-type repeats span residues 71–97 (LKHE…VVKN) and 104–130 (CRHE…LRDD). The Fe cation site is built by H73, E74, H106, and E107. The disordered stretch occupies residues 159–183 (EKLKPSDFTSIDPAPPLPMASSQPS). HEAT-like PBS-type repeat units lie at residues 200–233 (QRYR…GLKD), 238–264 (FRHE…TLSD), and 271–298 (VRHE…FLND). Residues H240, E241, H273, and E274 each contribute to the Fe cation site.

This sequence belongs to the deoxyhypusine hydroxylase family. Fe(2+) is required as a cofactor.

The protein localises to the cytoplasm. It localises to the nucleus. It catalyses the reaction [eIF5A protein]-deoxyhypusine + AH2 + O2 = [eIF5A protein]-hypusine + A + H2O. It functions in the pathway protein modification; eIF5A hypusination. In terms of biological role, catalyzes the hydroxylation of the N(6)-(4-aminobutyl)-L-lysine intermediate to form hypusine, an essential post-translational modification only found in mature eIF-5A factor. This Aspergillus oryzae (strain ATCC 42149 / RIB 40) (Yellow koji mold) protein is Deoxyhypusine hydroxylase (lia1).